Consider the following 505-residue polypeptide: uncharacterized protein (505 aa).

Helical transmembrane passes span 9–29, 49–69, 86–106, 122–142, 156–176, 181–201, 235–255, 261–281, 310–330, 341–361, 371–391, 395–415, 435–455, and 464–484; these read ANLT…PFIV, YFSV…SVAA, AASV…AFFI, LSIL…GFGA, IQAV…ACFA, QIQL…FYFF, IGVL…LGAS, AAII…ASLF, LLLA…LTIW, LLFI…LFYI, PAIV…TLSG, LGLY…NAIF, IIGP…IQFI, and LIAT…MLVC.

It is found in the cell membrane. May be involved in the production of the exopolysaccharide (EPS) component of the extracellular matrix during biofilm formation. EPS is responsible for the adhesion of chains of cells into bundles. This is an uncharacterized protein from Bacillus subtilis (strain 168).